We begin with the raw amino-acid sequence, 205 residues long: Small ribosomal subunit protein uS4c (205 aa).

The segment at 16–40 (GKLPSLTNKTSKKRKSPGQPATSFK) is disordered. One can recognise an S4 RNA-binding domain in the interval 93–161 (MRLDNIVHRI…IQKNIESKEL (69 aa)).

The protein belongs to the universal ribosomal protein uS4 family. In terms of assembly, part of the 30S ribosomal subunit. Contacts protein S5. The interaction surface between S4 and S5 is involved in control of translational fidelity.

It localises to the plastid. The protein localises to the chloroplast. In terms of biological role, one of the primary rRNA binding proteins, it binds directly to 16S rRNA where it nucleates assembly of the body of the 30S subunit. With S5 and S12 plays an important role in translational accuracy. The sequence is that of Small ribosomal subunit protein uS4c (rps4) from Euglena gracilis.